The following is a 389-amino-acid chain: Serpentine receptor class alpha/beta-14 (389 aa).

Topologically, residues 1–45 (MPSDDFVKTARKALISHSVSIQNYTEDDCQIAFHATTNSFMQTIR) are extracellular. The N-linked (GlcNAc...) asparagine glycan is linked to asparagine 23. A helical transmembrane segment spans residues 46-66 (LVHIFFCTFGAISSSLFIYVL). The Cytoplasmic segment spans residues 67–81 (LNSSSRNLHRNLRIS). The chain crosses the membrane as a helical span at residues 82 to 102 (LASLAFAALIACLQLDFIAFY). Residues 103 to 123 (HLALTLTADNACDSMYEARKC) are Extracellular-facing. The cysteines at positions 123 and 198 are disulfide-linked. The chain crosses the membrane as a helical span at residues 124-144 (AILRFPVVLSIYATLCGIIVL). At 145–167 (AIERTIATLKYKTYEANGSRVVG) the chain is on the cytoplasmic side. The chain crosses the membrane as a helical span at residues 168–188 (LVLVTGQWFVCIIVAVFSVLL). The Extracellular portion of the chain corresponds to 189–208 (RSDPGYVHYCTAYVSHPRTS). The chain crosses the membrane as a helical span at residues 209-229 (VFSLCFMSALEVATLVYFVLL). At 230–268 (LQSNQRRQVNEFVNKAMHSLSERYQLQENVRIMKILIPS) the chain is on the cytoplasmic side. Residues 269–289 (ITVHAILGFIGLGSMLAFAII) form a helical membrane-spanning segment. Residues 290-303 (YRYADERLIVGFAP) lie on the Extracellular side of the membrane. Residues 304-324 (FSEVVLLVIPIYAVVFPIVAV) traverse the membrane as a helical segment. Topologically, residues 325 to 389 (VQNKQLRLAS…FDLLNEMWKK (65 aa)) are cytoplasmic.

This sequence belongs to the nematode receptor-like protein srab family.

It is found in the membrane. In Caenorhabditis elegans, this protein is Serpentine receptor class alpha/beta-14.